Reading from the N-terminus, the 325-residue chain is Tagatose 1,6-diphosphate aldolase 1 (325 aa).

This sequence belongs to the aldolase LacD family.

It carries out the reaction D-tagatofuranose 1,6-bisphosphate = D-glyceraldehyde 3-phosphate + dihydroxyacetone phosphate. Its pathway is carbohydrate metabolism; D-tagatose 6-phosphate degradation; D-glyceraldehyde 3-phosphate and glycerone phosphate from D-tagatose 6-phosphate: step 2/2. The polypeptide is Tagatose 1,6-diphosphate aldolase 1 (lacD1) (Enterococcus faecalis (strain ATCC 700802 / V583)).